The primary structure comprises 431 residues: SH2 domain-containing protein 4B (431 aa).

The disordered stretch occupies residues 201–235 (QASENEEREWEEQLRRSKAADEERSRRAQRARDEY). The span at 211–235 (EEQLRRSKAADEERSRRAQRARDEY) shows a compositional bias: basic and acidic residues. Residues 325–417 (WFHGIISRES…SGGELLQEPC (93 aa)) form the SH2 domain.

The protein is SH2 domain-containing protein 4B (Sh2d4b) of Mus musculus (Mouse).